The primary structure comprises 307 residues: Protease HtpX homolog (307 aa).

2 consecutive transmembrane segments (helical) span residues 10–30 and 40–60; these read VITI…AYGL and ISII…QWLV. A Zn(2+)-binding site is contributed by histidine 144. Residue glutamate 145 is part of the active site. Histidine 148 is a Zn(2+) binding site. Helical transmembrane passes span 156-176 and 187-207; these read LLLA…SMIF and FFLV…MILG. Glutamate 213 is a binding site for Zn(2+).

This sequence belongs to the peptidase M48B family. It depends on Zn(2+) as a cofactor.

It is found in the cell membrane. The chain is Protease HtpX homolog from Picrophilus torridus (strain ATCC 700027 / DSM 9790 / JCM 10055 / NBRC 100828 / KAW 2/3).